The chain runs to 161 residues: Nucleotide-binding protein Nmul_A1044 (161 aa).

This sequence belongs to the YajQ family.

Functionally, nucleotide-binding protein. In Nitrosospira multiformis (strain ATCC 25196 / NCIMB 11849 / C 71), this protein is Nucleotide-binding protein Nmul_A1044.